The chain runs to 1027 residues: INO80 complex subunit D (1027 aa).

A Glycyl lysine isopeptide (Lys-Gly) (interchain with G-Cter in SUMO2) cross-link involves residue K87. A Phosphoserine modification is found at S132. Disordered regions lie at residues 193–278, 519–574, 813–850, 914–969, and 982–1027; these read HFSP…VDPP, RGDN…LSMP, RQQYSSDHSHSSPHGSHYDSEHVPSPYSDHITSPHTTS, LSTS…TSPK, and QLSS…PSPN. The span at 201–216 shows a compositional bias: low complexity; sequence SQQQPPQQHSHLSPLS. Residues 229–257 are compositionally biased toward polar residues; that stretch reads VCKSPQPQNTSLPMQGVAPTTHTIAQARQ. Positions 525 to 559 are enriched in basic residues; that stretch reads KVQHQQQRKPRKKTKPPALTKKHKKKRRRGPRRPQ. Over residues 914–932 the composition is skewed to low complexity; the sequence is LSTSLSTPPTTSNSETTQP. Polar residues predominate over residues 937–954; it reads VTPSSSSVLPGLPQTSFS. The segment covering 1001–1027 has biased composition (low complexity); that stretch reads APPTGFTVTGATATSTNNASSPFPSPN.

This sequence belongs to the INO80D family. As to quaternary structure, component of the chromatin remodeling INO80 complex; specifically part of a complex module associated with the N-terminus of INO80.

The protein localises to the nucleus. Putative regulatory component of the chromatin remodeling INO80 complex which is involved in transcriptional regulation, DNA replication and probably DNA repair. The chain is INO80 complex subunit D from Homo sapiens (Human).